The primary structure comprises 146 residues: Hemoglobin subunit beta (146 aa).

N-acetylvaline is present on valine 1. A Globin domain is found at 2–146; that stretch reads HLTAEEKSAV…VATALAHKYH (145 aa). Phosphothreonine is present on threonine 12. Serine 44 carries the phosphoserine modification. Lysine 59 carries the N6-acetyllysine modification. A heme b-binding site is contributed by histidine 63. Lysine 82 carries the N6-acetyllysine modification. A heme b-binding site is contributed by histidine 92. The residue at position 93 (cysteine 93) is an S-nitrosocysteine. Position 144 is an N6-acetyllysine (lysine 144).

It belongs to the globin family. Heterotetramer of two alpha chains and two beta chains. As to expression, red blood cells.

Involved in oxygen transport from the lung to the various peripheral tissues. The chain is Hemoglobin subunit beta (HBB) from Cebus albifrons (White-fronted capuchin).